Reading from the N-terminus, the 277-residue chain is Large ribosomal subunit protein uL2 (277 aa).

The disordered stretch occupies residues 219-277; sequence TVRGSVMNPNDHPHGGGEGKAPVGRKAPSTPWGKPALGLKTRNKKAKSDKLIVRRRNQK.

It belongs to the universal ribosomal protein uL2 family. Part of the 50S ribosomal subunit. Forms a bridge to the 30S subunit in the 70S ribosome.

In terms of biological role, one of the primary rRNA binding proteins. Required for association of the 30S and 50S subunits to form the 70S ribosome, for tRNA binding and peptide bond formation. It has been suggested to have peptidyltransferase activity; this is somewhat controversial. Makes several contacts with the 16S rRNA in the 70S ribosome. The sequence is that of Large ribosomal subunit protein uL2 from Streptococcus suis (strain 98HAH33).